We begin with the raw amino-acid sequence, 68 residues long: MAKVKMKTNKTAAKRFKVTAKGKIKYWKGGVSHYNTKKSSKRKRQGRKADYVPENIADRVKQLIPYQV.

Belongs to the bacterial ribosomal protein bL35 family.

The chain is Large ribosomal subunit protein bL35 from Persephonella marina (strain DSM 14350 / EX-H1).